Consider the following 361-residue polypeptide: Mannose-1-phosphate guanyltransferase (361 aa).

This sequence belongs to the transferase hexapeptide repeat family.

The protein localises to the cytoplasm. The enzyme catalyses alpha-D-mannose 1-phosphate + GTP + H(+) = GDP-alpha-D-mannose + diphosphate. It participates in nucleotide-sugar biosynthesis; GDP-alpha-D-mannose biosynthesis; GDP-alpha-D-mannose from alpha-D-mannose 1-phosphate (GTP route): step 1/1. Its function is as follows. Involved in cell wall synthesis where it is required for glycosylation. Involved in cell cycle progression through cell-size checkpoint. The sequence is that of Mannose-1-phosphate guanyltransferase (MPG1) from Kluyveromyces lactis (strain ATCC 8585 / CBS 2359 / DSM 70799 / NBRC 1267 / NRRL Y-1140 / WM37) (Yeast).